The primary structure comprises 116 residues: Nitrogenase-stabilizing/protective protein NifW (116 aa).

This sequence belongs to the NifW family. Homotrimer; associates with NifD.

May protect the nitrogenase Fe-Mo protein from oxidative damage. In Rhodopseudomonas palustris (strain ATCC BAA-98 / CGA009), this protein is Nitrogenase-stabilizing/protective protein NifW.